The following is an 847-amino-acid chain: Alanine--tRNA ligase (847 aa).

Residues histidine 554, histidine 558, cysteine 656, and histidine 660 each coordinate Zn(2+).

The protein belongs to the class-II aminoacyl-tRNA synthetase family. It depends on Zn(2+) as a cofactor.

Its subcellular location is the cytoplasm. It catalyses the reaction tRNA(Ala) + L-alanine + ATP = L-alanyl-tRNA(Ala) + AMP + diphosphate. Its function is as follows. Catalyzes the attachment of alanine to tRNA(Ala) in a two-step reaction: alanine is first activated by ATP to form Ala-AMP and then transferred to the acceptor end of tRNA(Ala). Also edits incorrectly charged Ser-tRNA(Ala) and Gly-tRNA(Ala) via its editing domain. The chain is Alanine--tRNA ligase from Helicobacter pylori (strain HPAG1).